We begin with the raw amino-acid sequence, 419 residues long: Serine hydroxymethyltransferase (419 aa).

(6S)-5,6,7,8-tetrahydrofolate is bound by residues Leu121 and 125 to 127; that span reads GHL. At Lys230 the chain carries N6-(pyridoxal phosphate)lysine. 355 to 357 contacts (6S)-5,6,7,8-tetrahydrofolate; sequence SPF.

The protein belongs to the SHMT family. As to quaternary structure, homodimer. The cofactor is pyridoxal 5'-phosphate.

Its subcellular location is the cytoplasm. It catalyses the reaction (6R)-5,10-methylene-5,6,7,8-tetrahydrofolate + glycine + H2O = (6S)-5,6,7,8-tetrahydrofolate + L-serine. It functions in the pathway one-carbon metabolism; tetrahydrofolate interconversion. It participates in amino-acid biosynthesis; glycine biosynthesis; glycine from L-serine: step 1/1. Functionally, catalyzes the reversible interconversion of serine and glycine with tetrahydrofolate (THF) serving as the one-carbon carrier. This reaction serves as the major source of one-carbon groups required for the biosynthesis of purines, thymidylate, methionine, and other important biomolecules. Also exhibits THF-independent aldolase activity toward beta-hydroxyamino acids, producing glycine and aldehydes, via a retro-aldol mechanism. The sequence is that of Serine hydroxymethyltransferase from Alkalilimnicola ehrlichii (strain ATCC BAA-1101 / DSM 17681 / MLHE-1).